A 279-amino-acid polypeptide reads, in one-letter code: Urease accessory protein UreD (279 aa).

Belongs to the UreD family. In terms of assembly, ureD, UreF and UreG form a complex that acts as a GTP-hydrolysis-dependent molecular chaperone, activating the urease apoprotein by helping to assemble the nickel containing metallocenter of UreC. The UreE protein probably delivers the nickel.

Its subcellular location is the cytoplasm. Functionally, required for maturation of urease via the functional incorporation of the urease nickel metallocenter. This Brucella suis (strain ATCC 23445 / NCTC 10510) protein is Urease accessory protein UreD.